A 122-amino-acid chain; its full sequence is Large ribosomal subunit protein bL12 (122 aa).

The protein belongs to the bacterial ribosomal protein bL12 family. In terms of assembly, homodimer. Part of the ribosomal stalk of the 50S ribosomal subunit. Forms a multimeric L10(L12)X complex, where L10 forms an elongated spine to which 2 to 4 L12 dimers bind in a sequential fashion. Binds GTP-bound translation factors.

Its function is as follows. Forms part of the ribosomal stalk which helps the ribosome interact with GTP-bound translation factors. Is thus essential for accurate translation. This chain is Large ribosomal subunit protein bL12, found in Mycoplasma mycoides subsp. mycoides SC (strain CCUG 32753 / NCTC 10114 / PG1).